The primary structure comprises 611 residues: Probable methyltransferase PMT19 (611 aa).

Topologically, residues 1–15 (MNPSQQHLPKLCPKR) are cytoplasmic. A helical; Signal-anchor for type II membrane protein transmembrane segment spans residues 16–36 (LFLFFTPFLLFSLYYILTTIK). At 37-611 (TITISSQDRH…TILIVDNSIK (575 aa)) the chain is on the lumenal side. Residues Asn-68, Asn-97, Asn-289, Asn-408, Asn-411, and Asn-587 are each glycosylated (N-linked (GlcNAc...) asparagine).

This sequence belongs to the methyltransferase superfamily.

The protein resides in the endoplasmic reticulum membrane. The chain is Probable methyltransferase PMT19 from Arabidopsis thaliana (Mouse-ear cress).